Reading from the N-terminus, the 340-residue chain is MTFWSILRQRCWGLVLVVAGVCVITFIISHLIPGDPARLLAGDRASDAIVENIRQQLGLDQPLYVQFYRYVSDLFHGDLGTSIRTGRPVLEELRIFFPATLELAFGALLLALLIGIPLGILSAVWRNRWLDHLVRIMAITGISTPAFWLGLGVIVLFYGHLQILPGGGRLDDWLDPPTHVTGFYLLDALLEGNGEVFFNALQHLILPALTLAFVHLGIVARQIRSAMLEQLSEDYIRTARASGLPGWYIVLCYALPNALIPSITVLGLALGDLLYGAVLTETVFAWPGMGAWVVTSIQALDFPAVMGFAVVVSFAYVLVNLVVDLLYLWIDPRIGRGGGE.

Residues 1 to 11 (MTFWSILRQRC) lie on the Periplasmic side of the membrane. Residues 12–32 (WGLVLVVAGVCVITFIISHLI) traverse the membrane as a helical segment. Residues 33-104 (PGDPARLLAG…IFFPATLELA (72 aa)) are Cytoplasmic-facing. The 231-residue stretch at 97 to 327 (FPATLELAFG…LVNLVVDLLY (231 aa)) folds into the ABC transmembrane type-1 domain. Residues 105-125 (FGALLLALLIGIPLGILSAVW) traverse the membrane as a helical segment. At 126–135 (RNRWLDHLVR) the chain is on the periplasmic side. A helical membrane pass occupies residues 136–156 (IMAITGISTPAFWLGLGVIVL). Over 157–199 (FYGHLQILPGGGRLDDWLDPPTHVTGFYLLDALLEGNGEVFFN) the chain is Cytoplasmic. The helical transmembrane segment at 200–220 (ALQHLILPALTLAFVHLGIVA) threads the bilayer. At 221 to 246 (RQIRSAMLEQLSEDYIRTARASGLPG) the chain is on the periplasmic side. The helical transmembrane segment at 247 to 269 (WYIVLCYALPNALIPSITVLGLA) threads the bilayer. Over 270-279 (LGDLLYGAVL) the chain is Cytoplasmic. The helical transmembrane segment at 280–300 (TETVFAWPGMGAWVVTSIQAL) threads the bilayer. Asp301 is a topological domain (periplasmic). Residues 302–322 (FPAVMGFAVVVSFAYVLVNLV) form a helical membrane-spanning segment. At 323-340 (VDLLYLWIDPRIGRGGGE) the chain is on the cytoplasmic side.

This sequence belongs to the binding-protein-dependent transport system permease family. OppBC subfamily. The complex is composed of two ATP-binding proteins (DdpD and DdpF), two transmembrane proteins (DdpB and DdpC) and a solute-binding protein (DdpA).

The protein localises to the cell inner membrane. Functionally, part of the ABC transporter complex DdpABCDF, which is probably involved in D,D-dipeptide transport. Probably responsible for the translocation of the substrate across the membrane. The polypeptide is Probable D,D-dipeptide transport system permease protein DdpB (ddpB) (Escherichia coli (strain K12)).